A 324-amino-acid polypeptide reads, in one-letter code: HTH-type transcriptional regulator GlxA (324 aa).

The HTH araC/xylS-type domain maps to 223 to 321; that stretch reads LAVLEKMETA…SQTPGSLRRR (99 aa). 2 consecutive DNA-binding regions (H-T-H motif) follow at residues 240-261 and 288-311; these read TAMA…REHR and IPEI…KRLF.

This chain is HTH-type transcriptional regulator GlxA (glxA), found in Rhizobium meliloti (strain 1021) (Ensifer meliloti).